The following is a 587-amino-acid chain: uncharacterized protein (587 aa).

The signal sequence occupies residues 1-21 (MANRLLIYGLILWVSIIGSFA). Residues 22-541 (LDRNKTAQNA…LEKEVSFQRR (520 aa)) lie on the Lumenal side of the membrane. A glycan (N-linked (GlcNAc...) asparagine) is linked at Asn25. A disordered region spans residues 44 to 108 (GSTTNVQKEH…RNPGDSSNSF (65 aa)). Basic and acidic residues predominate over residues 63-90 (RTHDFRQASKVDIRQADIRENGERKEQD). The segment covering 91-108 (ALTQPATPRNPGDSSNSF) has biased composition (polar residues). Residues 163–331 (NEWSEREENQ…SLIKVYGKSM (169 aa)) enclose the SUN domain. Residues Asn378, Asn381, Asn408, Asn448, and Asn486 are each glycosylated (N-linked (GlcNAc...) asparagine). Residues 542-562 (IVYASFFAFVGLISYLLITRE) traverse the membrane as a helical segment. Residues 563–587 (LYFEDFEESKNGAIEKADIVQQAIR) lie on the Cytoplasmic side of the membrane.

It belongs to the SLP1 family. Interacts with EMP65.

It localises to the endoplasmic reticulum membrane. Its function is as follows. May be involved in membrane protein folding. Required for localization of MPS3 to the nuclear envelope. This is an uncharacterized protein from Saccharomyces cerevisiae (strain ATCC 204508 / S288c) (Baker's yeast).